The sequence spans 432 residues: G-protein coupled receptor 22 (432 aa).

Residues 1-45 (MCFSPVLEINMQSESNVTVRDDIDDIDTNMYQPLSYPLSFQVSLT) are Extracellular-facing. The N-linked (GlcNAc...) asparagine glycan is linked to N16. The helical transmembrane segment at 46-66 (GFLMLEIVLGLGSNLTVLVLY) threads the bilayer. Residues 67–85 (CMKSNLINSVSNIITMNLH) are Cytoplasmic-facing. The helical transmembrane segment at 86-106 (VLDVIICVGCIPLTIVILLLS) threads the bilayer. Residues 107 to 115 (LESNTALIC) are Extracellular-facing. A helical membrane pass occupies residues 116–136 (CFHEACVSFASVSTAINVFAI). Residues 137–156 (TLDRYDISVKPANRILTMGR) lie on the Cytoplasmic side of the membrane. The chain crosses the membrane as a helical span at residues 157–177 (AVMLMTSIWIFSFFSFLIPFI). The Extracellular segment spans residues 178 to 208 (EVNFFSLQSGNTWANKTLLCVSTSEYYTELG). N192 is a glycosylation site (N-linked (GlcNAc...) asparagine). A helical transmembrane segment spans residues 209 to 229 (MYYHLLVQIPIFFFTVIVMLI). Residues 230–314 (TYTKILQALN…ERQKRVFKMS (85 aa)) lie on the Cytoplasmic side of the membrane. Residues 315 to 335 (LLIISTFLLCWTPISVLNTTI) traverse the membrane as a helical segment. Topologically, residues 336–348 (LCLGPSDLLVKLR) are extracellular. Residues 349–369 (LCFLVMAYGTTIFHPLLYAFT) form a helical membrane-spanning segment. Residues 370–432 (RQKFQKVLKS…KCLVPQVVTD (63 aa)) lie on the Cytoplasmic side of the membrane.

This sequence belongs to the G-protein coupled receptor 1 family. Abundant levels detected in the brain and heart and no detectable expression in other peripheral tissues.

The protein resides in the cell membrane. In terms of biological role, orphan G-protein coupled receptor. Seems to act through a G(i)/G(o) mediated pathway. May be involved in ciliogenesis. The chain is G-protein coupled receptor 22 (Gpr22) from Mus musculus (Mouse).